A 217-amino-acid polypeptide reads, in one-letter code: HTH-type transcriptional regulator EthR (217 aa).

Positions 1-22 (MTTASQTRTPRGRRSARPSGDD) are disordered. The region spanning 21 to 81 (DDREAAILAT…SLIDPLIKRA (61 aa)) is the HTH tetR-type domain. Positions 44-63 (SVDDLAKGAGISRPTFYFYF) form a DNA-binding region, H-T-H motif.

As to quaternary structure, homodimer.

Functionally, involved in the repression of teh monooxygenase EthA which is responsible of the formation of the active metabolite of ethionamide (ETH). This Mycolicibacterium smegmatis (strain ATCC 700084 / mc(2)155) (Mycobacterium smegmatis) protein is HTH-type transcriptional regulator EthR (ethR).